We begin with the raw amino-acid sequence, 194 residues long: Fe/S biogenesis protein NfuA (194 aa).

[4Fe-4S] cluster-binding residues include Cys-151 and Cys-154.

This sequence belongs to the NfuA family. Homodimer. It depends on [4Fe-4S] cluster as a cofactor.

In terms of biological role, involved in iron-sulfur cluster biogenesis. Binds a 4Fe-4S cluster, can transfer this cluster to apoproteins, and thereby intervenes in the maturation of Fe/S proteins. Could also act as a scaffold/chaperone for damaged Fe/S proteins. In Vibrio vulnificus (strain CMCP6), this protein is Fe/S biogenesis protein NfuA.